The primary structure comprises 545 residues: ATP synthase subunit alpha (545 aa).

172–179 (GDRKTGKT) lines the ATP pocket. Residues 511–545 (FQTTDGTPVINEPEARPLGDDEVTKSQITVSRKTQ) are disordered. A compositionally biased stretch (basic and acidic residues) spans 523–534 (PEARPLGDDEVT). Positions 535–545 (KSQITVSRKTQ) are enriched in polar residues.

Belongs to the ATPase alpha/beta chains family. F-type ATPases have 2 components, CF(1) - the catalytic core - and CF(0) - the membrane proton channel. CF(1) has five subunits: alpha(3), beta(3), gamma(1), delta(1), epsilon(1). CF(0) has three main subunits: a(1), b(2) and c(9-12). The alpha and beta chains form an alternating ring which encloses part of the gamma chain. CF(1) is attached to CF(0) by a central stalk formed by the gamma and epsilon chains, while a peripheral stalk is formed by the delta and b chains.

It is found in the cell membrane. The enzyme catalyses ATP + H2O + 4 H(+)(in) = ADP + phosphate + 5 H(+)(out). Functionally, produces ATP from ADP in the presence of a proton gradient across the membrane. The alpha chain is a regulatory subunit. The protein is ATP synthase subunit alpha of Corynebacterium jeikeium (strain K411).